We begin with the raw amino-acid sequence, 343 residues long: L-threonine 3-dehydrogenase (343 aa).

C40 provides a ligand contact to Zn(2+). Active-site charge relay system residues include T42 and H45. Zn(2+)-binding residues include H65, E66, C95, C98, C101, and C109. Residues I177, D197, R202, 264–266 (LGI), and 288–289 (IY) each bind NAD(+).

The protein belongs to the zinc-containing alcohol dehydrogenase family. As to quaternary structure, homotetramer. Requires Zn(2+) as cofactor.

It localises to the cytoplasm. The catalysed reaction is L-threonine + NAD(+) = (2S)-2-amino-3-oxobutanoate + NADH + H(+). It functions in the pathway amino-acid degradation; L-threonine degradation via oxydo-reductase pathway; glycine from L-threonine: step 1/2. Functionally, catalyzes the NAD(+)-dependent oxidation of L-threonine to 2-amino-3-ketobutyrate. The sequence is that of L-threonine 3-dehydrogenase from Photobacterium profundum (strain SS9).